Consider the following 967-residue polypeptide: Phosphoenolpyruvate carboxylase (967 aa).

S11 carries the phosphoserine modification. Catalysis depends on residues H172 and K601.

It belongs to the PEPCase type 1 family. Homotetramer. Requires Mg(2+) as cofactor.

The protein localises to the cytoplasm. The catalysed reaction is oxaloacetate + phosphate = phosphoenolpyruvate + hydrogencarbonate. It functions in the pathway photosynthesis; C3 acid pathway. By light-reversible phosphorylation. Its function is as follows. Through the carboxylation of phosphoenolpyruvate (PEP) it forms oxaloacetate, a four-carbon dicarboxylic acid source for the tricarboxylic acid cycle. The sequence is that of Phosphoenolpyruvate carboxylase (PPCA1) from Flaveria pringlei.